The chain runs to 511 residues: Probable lipid II flippase MurJ (511 aa).

11 helical membrane passes run 25–45 (DILI…FISF), 85–105 (SSIL…GGFF), 133–153 (IMFP…ILNS), 156–178 (YFSI…SVFF), 245–265 (ISLI…ISWI), 271–291 (LIEF…FTSL), 315–335 (LIVS…VIIV), 356–376 (LYSC…AFYA), 400–420 (FLIF…TSWV), 442–462 (FIFI…LFVV), and 481–501 (LFFG…ILGI).

Belongs to the MurJ/MviN family.

It localises to the cell inner membrane. Its pathway is cell wall biogenesis; peptidoglycan biosynthesis. Involved in peptidoglycan biosynthesis. Transports lipid-linked peptidoglycan precursors from the inner to the outer leaflet of the cytoplasmic membrane. The sequence is that of Probable lipid II flippase MurJ from Buchnera aphidicola subsp. Acyrthosiphon pisum (strain APS) (Acyrthosiphon pisum symbiotic bacterium).